The following is a 408-amino-acid chain: Energy-coupling factor transporter ATP-binding protein EcfA1 (408 aa).

The ABC transporter domain maps to 140-374 (IEIKNLSFKY…KEFLRNIQLD (235 aa)). ATP is bound at residue 174–181 (GHNGSGKS).

The protein belongs to the ABC transporter superfamily. Energy-coupling factor EcfA family. In terms of assembly, forms a stable energy-coupling factor (ECF) transporter complex composed of 2 membrane-embedded substrate-binding proteins (S component), 2 ATP-binding proteins (A component) and 2 transmembrane proteins (T component).

The protein localises to the cell membrane. Its function is as follows. ATP-binding (A) component of a common energy-coupling factor (ECF) ABC-transporter complex. Unlike classic ABC transporters this ECF transporter provides the energy necessary to transport a number of different substrates. The polypeptide is Energy-coupling factor transporter ATP-binding protein EcfA1 (Mycoplasma capricolum subsp. capricolum (strain California kid / ATCC 27343 / NCTC 10154)).